Here is a 70-residue protein sequence, read N- to C-terminus: DNA gyrase inhibitor YacG (70 aa).

Zn(2+) contacts are provided by Cys-20, Cys-23, Cys-35, and Cys-39.

The protein belongs to the DNA gyrase inhibitor YacG family. As to quaternary structure, interacts with GyrB. Zn(2+) is required as a cofactor.

Its function is as follows. Inhibits all the catalytic activities of DNA gyrase by preventing its interaction with DNA. Acts by binding directly to the C-terminal domain of GyrB, which probably disrupts DNA binding by the gyrase. The chain is DNA gyrase inhibitor YacG from Rhizobium etli (strain ATCC 51251 / DSM 11541 / JCM 21823 / NBRC 15573 / CFN 42).